We begin with the raw amino-acid sequence, 366 residues long: Histidinol-phosphate aminotransferase (366 aa).

Lys228 carries the N6-(pyridoxal phosphate)lysine modification.

The protein belongs to the class-II pyridoxal-phosphate-dependent aminotransferase family. Histidinol-phosphate aminotransferase subfamily. As to quaternary structure, homodimer. Requires pyridoxal 5'-phosphate as cofactor.

The catalysed reaction is L-histidinol phosphate + 2-oxoglutarate = 3-(imidazol-4-yl)-2-oxopropyl phosphate + L-glutamate. It participates in amino-acid biosynthesis; L-histidine biosynthesis; L-histidine from 5-phospho-alpha-D-ribose 1-diphosphate: step 7/9. The sequence is that of Histidinol-phosphate aminotransferase from Corynebacterium glutamicum (strain ATCC 13032 / DSM 20300 / JCM 1318 / BCRC 11384 / CCUG 27702 / LMG 3730 / NBRC 12168 / NCIMB 10025 / NRRL B-2784 / 534).